The following is a 292-amino-acid chain: Large ribosomal subunit protein bL19m (292 aa).

The segment at 39–68 is disordered; the sequence is GPGRRQITGPSEPGVFQPPPKPVIVDKRGP. S77 carries the post-translational modification Phosphoserine.

This sequence belongs to the bacterial ribosomal protein bL19 family. Component of the mitochondrial ribosome large subunit (39S) which comprises a 16S rRNA and about 50 distinct proteins.

It is found in the mitochondrion. The sequence is that of Large ribosomal subunit protein bL19m (MRPL19) from Bos taurus (Bovine).